The sequence spans 599 residues: Elongation factor 4 (599 aa).

One can recognise a tr-type G domain in the interval 2 to 184 (KNIRNFSIIA…RLVRDIPPPE (183 aa)). Residues 14–19 (DHGKST) and 131–134 (NKID) each bind GTP.

This sequence belongs to the TRAFAC class translation factor GTPase superfamily. Classic translation factor GTPase family. LepA subfamily.

Its subcellular location is the cell inner membrane. The enzyme catalyses GTP + H2O = GDP + phosphate + H(+). In terms of biological role, required for accurate and efficient protein synthesis under certain stress conditions. May act as a fidelity factor of the translation reaction, by catalyzing a one-codon backward translocation of tRNAs on improperly translocated ribosomes. Back-translocation proceeds from a post-translocation (POST) complex to a pre-translocation (PRE) complex, thus giving elongation factor G a second chance to translocate the tRNAs correctly. Binds to ribosomes in a GTP-dependent manner. This is Elongation factor 4 from Escherichia fergusonii (strain ATCC 35469 / DSM 13698 / CCUG 18766 / IAM 14443 / JCM 21226 / LMG 7866 / NBRC 102419 / NCTC 12128 / CDC 0568-73).